Consider the following 332-residue polypeptide: UBA domain-containing protein Mud1 (332 aa).

Aspartate 127 is a catalytic residue. The disordered stretch occupies residues 246-298 (GLGIEPASKASASSPNPQSGTRLGTKESVAPNNEGSSNPPSLVNPPTDPGLNS). Residues 251-264 (PASKASASSPNPQS) show a composition bias toward low complexity. Positions 275–286 (APNNEGSSNPPS) are enriched in polar residues. Residues 291 to 332 (PTDPGLNSKIAQLVSMGFDPLEAAQALDAANGDLDVAASFLL) enclose the UBA domain.

This sequence belongs to the DDI1 family. Homodimer. Interacts (via UBA domain) with polyubiquitin (polyUb) chains (via Lys-48-linked polyUbs). Has weak binding affinity for monoubiquitin. According to another report, has no affinity for monoubiquitin.

It localises to the cytoplasm. The protein resides in the cell membrane. Recognizes and binds polyubiquitin chains. Acts as a linker between the 19S proteasome and polyubiquitinated proteins via UBA domain interactions with ubiquitin for their subsequent degradation. Aspartic protease. Appears to act as negative regulator of constitutive exocytosis. May act at the level of secretory vesicle docking and fusion as a competitive inhibitor of SNARE assembly. Required for S-phase checkpoint control. In Schizosaccharomyces pombe (strain 972 / ATCC 24843) (Fission yeast), this protein is UBA domain-containing protein Mud1.